The primary structure comprises 39 residues: Photosystem II reaction center protein Y (39 aa).

Residues 5–23 form a helical membrane-spanning segment; the sequence is VLIVLTPLLIAGGWAVFNI.

It belongs to the PsbY family. As to quaternary structure, PSII is composed of 1 copy each of membrane proteins PsbA, PsbB, PsbC, PsbD, PsbE, PsbF, PsbH, PsbI, PsbJ, PsbK, PsbL, PsbM, PsbT, PsbX, PsbY, PsbZ, Psb30/Ycf12, peripheral proteins PsbO, CyanoQ (PsbQ), PsbU, PsbV and a large number of cofactors. It forms dimeric complexes.

Its subcellular location is the cellular thylakoid membrane. Functionally, loosely associated component of the core of photosystem II (PSII), it is not always seen in crystals. PSII is a light-driven water plastoquinone oxidoreductase, using light energy to abstract electrons from H(2)O, generating a proton gradient subsequently used for ATP formation. The polypeptide is Photosystem II reaction center protein Y (Microcystis aeruginosa (strain NIES-843 / IAM M-2473)).